Reading from the N-terminus, the 198-residue chain is Carnitine operon protein CaiE (198 aa).

Residues 179–198 form a disordered region; that stretch reads VEENRPRLKGTTDVKPKSAQ. Positions 180-198 are enriched in basic and acidic residues; it reads EENRPRLKGTTDVKPKSAQ.

It belongs to the transferase hexapeptide repeat family.

The protein operates within amine and polyamine metabolism; carnitine metabolism. Its function is as follows. Overproduction of CaiE stimulates the activity of CaiB and CaiD. The chain is Carnitine operon protein CaiE from Salmonella enteritidis PT4 (strain P125109).